A 1090-amino-acid chain; its full sequence is Leucine-rich repeat receptor-like serine/threonine-protein kinase RGI4 (1090 aa).

The N-terminal stretch at Met-1–Phe-20 is a signal peptide. Topologically, residues Phe-21 to Lys-702 are extracellular. The stretch at Leu-36–Pro-59 is one LRR 1 repeat. Residue Asn-43 is glycosylated (N-linked (GlcNAc...) asparagine). A disulfide bridge connects residues Cys-60 and Cys-67. 4 LRR repeats span residues Ile-95–Leu-119, Ser-120–Leu-143, Lys-145–Asn-166, and Val-168–Leu-191. N-linked (GlcNAc...) asparagine glycosylation occurs at Asn-107. 4 short sequence motifs (small peptide recognition) span residues Phe-176–Asp-177, Arg-198–Gly-201, Thr-221–Glu-226, and Tyr-249. LRR repeat units follow at residues Cys-216–Leu-240, Lys-242–Cys-264, Thr-265–Leu-288, Lys-289–Cys-312, Glu-314–Asn-335, Leu-336–Cys-360, and Lys-362–Ser-386. The N-linked (GlcNAc...) asparagine glycan is linked to Asn-263. A CLE45 peptide binding motif is present at residues Asn-269–Tyr-273. A Small peptide recognition motif is present at residues Tyr-271–Tyr-273. Short sequence motifs (small peptide recognition) lie at residues Asp-319–Glu-322 and Glu-341–Gln-343. Asn-359 carries N-linked (GlcNAc...) asparagine glycosylation. 2 short sequence motifs (small peptide recognition) span residues Met-389–Trp-393 and Asp-415–Tyr-418. 11 LRR repeats span residues Cys-408–Ile-432, Asn-434–Cys-456, Thr-457–Leu-480, Lys-481–Cys-504, Ser-506–Pro-526, Lys-527–Leu-550, Thr-551–Cys-574, Ser-576–Ile-598, Ser-600–Ser-622, Leu-623–Leu-646, and Gln-647–Arg-670. 2 N-linked (GlcNAc...) asparagine glycosylation sites follow: Asn-420 and Asn-434. Positions Lys-437 to Leu-441 match the Small peptide recognition motif. Asn-455 carries an N-linked (GlcNAc...) asparagine glycan. A Small peptide recognition motif is present at residues Arg-461–Arg-463. Asn-606 is a glycosylation site (N-linked (GlcNAc...) asparagine). A glycan (N-linked (GlcNAc...) asparagine) is linked at Asn-653. A helical transmembrane segment spans residues Val-703–Leu-723. At Val-724–Val-1090 the chain is on the cytoplasmic side. Residues Leu-758–Ile-1040 form the Protein kinase domain. Residues Ile-764–Val-772 and Lys-786 each bind ATP. Tyr-829 and Tyr-869 each carry phosphotyrosine. Asp-882 acts as the Proton acceptor in catalysis. Residue Tyr-932 is modified to Phosphotyrosine. The LRR 24 repeat unit spans residues Leu-1037–Lys-1060. Residues Lys-1054 to Ser-1079 are disordered.

This sequence belongs to the protein kinase superfamily. Ser/Thr protein kinase family. Self-interacts. Interacts with RGF1; this interaction triggers its phosphorylation and ubiquitination and the formation of heterodimers with SERK1. Autophosphorylated. Post-translationally, phosphorylated and ubiquitinated upon interaction with RGF1, thus leading to activation a subsequent degradation. As to expression, expressed in floers, pollen grains and stipules. Present in roots.

Its subcellular location is the cell membrane. It carries out the reaction L-seryl-[protein] + ATP = O-phospho-L-seryl-[protein] + ADP + H(+). The enzyme catalyses L-threonyl-[protein] + ATP = O-phospho-L-threonyl-[protein] + ADP + H(+). Receptor with a serine/threonine-protein kinase activity. Together with SKM1, LRR-rich receptor-like kinase (LRR-RLK) required for male fertility by the perception of CLE43 and CLE45 peptides and the transduction of their promoting action in pollen tubes, especially under relatively high temperature (at 30 degrees Celsius), thus conferring tolerance against high temperature probably through the maintenance of mitochondrial activity. Seems to not be involved in the perception of CLE45 peptide in roots. Together with RGI1, RGI2, RGI3, RGI4 and RGI5, acts as receptor of RGF1, a peptide hormone that maintains the postembryonic root stem cell niche by regulating the expression levels and patterns of the transcription factor PLETHORA (PLT). Links RGF1 signal with its downstream components. This Arabidopsis thaliana (Mouse-ear cress) protein is Leucine-rich repeat receptor-like serine/threonine-protein kinase RGI4.